The primary structure comprises 525 residues: Asparagine synthetase [glutamine-hydrolyzing] (525 aa).

The active-site For GATase activity is the cysteine 2. Positions 2–185 constitute a Glutamine amidotransferase type-2 domain; the sequence is CGILAVLGCS…PGHLYSSKEG (184 aa). Residues 50–54, 75–77, and aspartate 98 contribute to the L-glutamine site; these read RLAII and NGE. An Asparagine synthetase domain is found at 193-517; sequence PPWFSEVIPS…QIDSPWRSKC (325 aa). ATP is bound by residues leucine 231, valine 267, and 341-342; that span reads SG.

It catalyses the reaction L-aspartate + L-glutamine + ATP + H2O = L-asparagine + L-glutamate + AMP + diphosphate + H(+). The protein operates within amino-acid biosynthesis; L-asparagine biosynthesis; L-asparagine from L-aspartate (L-Gln route): step 1/1. Functionally, could play a role in remobilization of nitrogen in flowers during senescence. This chain is Asparagine synthetase [glutamine-hydrolyzing] (AND1), found in Sandersonia aurantiaca (Christmas-bells).